A 624-amino-acid polypeptide reads, in one-letter code: tRNA uridine 5-carboxymethylaminomethyl modification enzyme MnmG (624 aa).

FAD contacts are provided by residues 13 to 18, Val-125, and Ser-180; that span reads GGGHAG. Position 273 to 287 (273 to 287) interacts with NAD(+); sequence GPRYCPSIEDKIVRF. Position 370 (Gln-370) interacts with FAD.

This sequence belongs to the MnmG family. In terms of assembly, homodimer. Heterotetramer of two MnmE and two MnmG subunits. FAD serves as cofactor.

The protein localises to the cytoplasm. Its function is as follows. NAD-binding protein involved in the addition of a carboxymethylaminomethyl (cmnm) group at the wobble position (U34) of certain tRNAs, forming tRNA-cmnm(5)s(2)U34. The sequence is that of tRNA uridine 5-carboxymethylaminomethyl modification enzyme MnmG from Legionella pneumophila (strain Corby).